A 492-amino-acid chain; its full sequence is Histone-lysine N-methyltransferase ASHH1 (492 aa).

The AWS domain maps to 36-87 (EDISICECKFDFGDPDSACGERCLNVITNTECTPGYCPCGVYCKNQKFQKCE). The 123-residue stretch at 84 to 206 (QKCEYAKTKL…PRTELAYDYN (123 aa)) folds into the SET domain. The Post-SET domain occupies 213 to 229 (AKVRCLCGAVACSGFLG). The interval 259 to 340 (SAEDELTSEP…NSQEDSSPKT (82 aa)) is disordered. Residues 266–275 (SEPSKNGESN) show a composition bias toward polar residues. Positions 277–290 (NEEKEKDISTENHL) are enriched in basic and acidic residues. Over residues 291 to 306 (ESTALNIQQQSDSTPT) the composition is skewed to polar residues. Residues 317–326 (VKTETSEDMK) show a composition bias toward basic and acidic residues. Over residues 328 to 339 (LSQNSQEDSSPK) the composition is skewed to polar residues.

This sequence belongs to the class V-like SAM-binding methyltransferase superfamily. Histone-lysine methyltransferase family. SET2 subfamily.

The protein localises to the nucleus. It localises to the chromosome. Its subcellular location is the centromere. The catalysed reaction is L-lysyl(4)-[histone H3] + 3 S-adenosyl-L-methionine = N(6),N(6),N(6)-trimethyl-L-lysyl(4)-[histone H3] + 3 S-adenosyl-L-homocysteine + 3 H(+). Histone methyltransferase involved in regulation of flowering time. Required for the expression of the SOC1/AGL20 gene. Required for histone H3 trimethylation on 'Lys-4' (H3K4me3) at the SOC1 locus. Prevents trimethylation on 'Lys-27' (H3K27me3) at the same locus. The protein is Histone-lysine N-methyltransferase ASHH1 (ASHH1) of Arabidopsis thaliana (Mouse-ear cress).